The primary structure comprises 486 residues: CREB-regulated transcription coactivator 1 homolog (486 aa).

The disordered stretch occupies residues 1-62 (MSNSNTPRKF…APMPIPQQGL (62 aa)). A compositionally biased stretch (basic and acidic residues) spans 9–23 (KFSEKIAILERKQNE). Polar residues predominate over residues 34 to 52 (QVQSITHHPTDSSGSSTAT). S76 bears the Phosphoserine; by AMPK mark. Residues 103 to 166 (PIQGHRSRSP…PPYNQPGQLV (64 aa)) form a disordered region. Pro residues predominate over residues 144 to 160 (RTPPQHPQYTPYGPPYN). Position 179 is a phosphoserine; by AMPK (S179). Disordered regions lie at residues 214-278 (SMPG…QSPN), 327-417 (FNQD…SNSP), and 460-486 (APPQ…MLQN). Composition is skewed to polar residues over residues 224–245 (PNSQ…QGSP), 387–402 (PESQ…QLDP), and 461–475 (PPQT…NNSF).

The protein belongs to the TORC family. Interacts with crh-1. Post-translationally, phosphorylated by AMPK at Ser-76 and Ser-179. Dephosphorylated by tax-6, the catalytic subunit of calcineurin. In terms of tissue distribution, expressed throughout the intestine and in head and tail neurons. Expressed in octopaminergic RIC neurons.

It localises to the nucleus. Its subcellular location is the cytoplasm. The protein localises to the cytosol. Transcriptional coactivator for crh-1, the homolog of vertebrate transcription factor CREB1. Regulates the transcription of metabolic genes and may have a role in mitochondrial dynamics and metabolism. Involved in modulation of lifespan. Through crh-1, counteracts the pro-lifespan-extension signals of AMPK both cell autonomously and, when expressed in neurons, at a systemic level, possibly using the catecholamine analog, octopamine, as a messenger. This Caenorhabditis elegans protein is CREB-regulated transcription coactivator 1 homolog.